Here is a 346-residue protein sequence, read N- to C-terminus: Dimethylallyltranstransferase (346 aa).

Residues Lys96, Arg99, and His128 each contribute to the isopentenyl diphosphate site. Mg(2+)-binding residues include Asp135 and Asp141. An isopentenyl diphosphate-binding site is contributed by Arg147.

The protein belongs to the FPP/GGPP synthase family. Mg(2+) serves as cofactor.

The enzyme catalyses isopentenyl diphosphate + dimethylallyl diphosphate = (2E)-geranyl diphosphate + diphosphate. It functions in the pathway isoprenoid biosynthesis; geranyl diphosphate biosynthesis; geranyl diphosphate from dimethylallyl diphosphate and isopentenyl diphosphate: step 1/1. Prenyltransferase involved in the biosynthesis of ambiguines, a family of hapalindole-type alkaloids. Catalyzes the addition of isopentenyl diphosphate (IPP) onto dimethylallyl diphosphate (DMAPP) to form geranyl pyrophosphate (GPP). Cannot use farnesyl diphosphate (FPP) or geranylgeranyl diphosphate (GGPP). The chain is Dimethylallyltranstransferase from Fischerella ambigua (strain UTEX 1903).